A 485-amino-acid polypeptide reads, in one-letter code: 3-isopropylmalate dehydratase large subunit (485 aa).

[4Fe-4S] cluster is bound by residues Cys367, Cys427, and Cys430. The segment covering 439–451 has biased composition (polar residues); that stretch reads SPGQRAASTSNRN. Residues 439–462 are disordered; it reads SPGQRAASTSNRNFEGRQGKGGRT.

This sequence belongs to the aconitase/IPM isomerase family. LeuC type 1 subfamily. As to quaternary structure, heterodimer of LeuC and LeuD. The cofactor is [4Fe-4S] cluster.

It carries out the reaction (2R,3S)-3-isopropylmalate = (2S)-2-isopropylmalate. The protein operates within amino-acid biosynthesis; L-leucine biosynthesis; L-leucine from 3-methyl-2-oxobutanoate: step 2/4. Functionally, catalyzes the isomerization between 2-isopropylmalate and 3-isopropylmalate, via the formation of 2-isopropylmaleate. This chain is 3-isopropylmalate dehydratase large subunit, found in Actinoplanes teichomyceticus.